Consider the following 653-residue polypeptide: MDRGVLPQAIALLLAVCSFGPTAGLAEGVQCDLQPVDPKVTYTTSQVSEGCVAHVPNATVGVHILFLEFSKEVSTLELTVQMTNPNGARPQEVLLILSVNKNIHLTLQVPEIPLHLAYDSKLVFLQEAPKAVITELPPSTTKNQLFLWANTKGSIISAAELDNPQSILLRLDQAPTSPSRCTLEPRKDMGHTLEWKSHTQASVLGCHLEGVTGHKEAHILRVLPGSEAWPRTVTVEVELSCALRDPEAVLILQGPPYVSWLIDANHNVKAWTTGEYSFKIFPGSNIQGVNLPDTRQGLLEEARKLNASVIASFVELPLASVISLQDRSCGSGLQPSPTTVQITPPGEGCNQDLLLSLIQPRCSDDVMTLVLRKDLISTLGCTITSLTFWDPSCQAEDTDDKFVLRGTYSSCGMKVAENVVISNEVVVNLLSSSSPQRKQVQCINLDSLSFQLGLYLSPHFLQASNTIELGQQGFVQVSMSPSIPELMTQLDSCQLNLGPDVEMVDLIQNQEAKSSCVSLLSPSPGGDMRFSFLLRGYVVPMPTAGILSCTVALRPRTWSLDVHKTASTRLNIVSPGLPDKGLVLPAVLGITFGAFLIGALLTAALWYIHSHTRHPGKREPVVAVAAPASSESSSTNHSIGSTQSTPCSTSSMA.

The N-terminal stretch at 1–24 (MDRGVLPQAIALLLAVCSFGPTAG) is a signal peptide. Residues 25-581 (LAEGVQCDLQ…IVSPGLPDKG (557 aa)) lie on the Extracellular side of the membrane. The tract at residues 27 to 44 (EGVQCDLQPVDPKVTYTT) is OR1, N-terminal part. The interval 27 to 336 (EGVQCDLQPV…RSCGSGLQPS (310 aa)) is required for interaction with GDF2. 7 disulfide bridges follow: C31/C206, C51/C181, C241/C329, C349/C381, C362/C442, C393/C411, and C493/C549. The OR2 stretch occupies residues 45–198 (SQVSEGCVAH…MGHTLEWKSH (154 aa)). An N-linked (GlcNAc...) asparagine glycan is attached at N57. The OR1, C-terminal part stretch occupies residues 199–329 (TQASVLGCHL…SVISLQDRSC (131 aa)). The segment at 269-281 (KAWTTGEYSFKIF) is essential for interaction with GDF2. The N-linked (GlcNAc...) asparagine glycan is linked to N306. One can recognise a ZP domain in the interval 362–512 (CSDDVMTLVL…MVDLIQNQEA (151 aa)). Residues 582–606 (LVLPAVLGITFGAFLIGALLTAALW) form a helical membrane-spanning segment. Residues 607 to 653 (YIHSHTRHPGKREPVVAVAAPASSESSSTNHSIGSTQSTPCSTSSMA) lie on the Cytoplasmic side of the membrane. Over residues 625 to 634 (AAPASSESSS) the composition is skewed to low complexity. Residues 625 to 653 (AAPASSESSSTNHSIGSTQSTPCSTSSMA) form a disordered region. The span at 635 to 653 (TNHSIGSTQSTPCSTSSMA) shows a compositional bias: polar residues. Phosphoserine; by TGFBR1 is present on residues S641 and S644.

In terms of assembly, homodimer; disulfide-linked. Forms a heteromeric complex with the signaling receptors for transforming growth factor-beta: TGFBR1 and/or TGFBR2. It is able to bind TGFB1 and TGFB2 with high affinity, but not TGFB3. Interacts with GDF2, forming a heterotetramer with a 2:2 stoichiometry. Interacts with ACVRL1. Can form a heteromeric complex with GDF2 and ACVRL1. Interacts with BMP10. Interacts with DYNLT4. Interacts with ARRB2.

Its subcellular location is the cell membrane. Functionally, vascular endothelium glycoprotein that plays an important role in the regulation of angiogenesis. Required for normal structure and integrity of adult vasculature. Regulates the migration of vascular endothelial cells. Required for normal extraembryonic angiogenesis and for embryonic heart development. May regulate endothelial cell shape changes in response to blood flow, which drive vascular remodeling and establishment of normal vascular morphology during angiogenesis. May play a role in the binding of endothelial cells to integrins. Acts as a TGF-beta coreceptor and is involved in the TGF-beta/BMP signaling cascade that ultimately leads to the activation of SMAD transcription factors. Required for GDF2/BMP9 signaling through SMAD1 in endothelial cells and modulates TGFB1 signaling through SMAD3. This chain is Endoglin (ENG), found in Sus scrofa (Pig).